The chain runs to 465 residues: Cruciform DNA-recognizing protein 1 (465 aa).

Disordered regions lie at residues 107 to 227 and 247 to 276; these read EAGG…VPNP and RLNKKEEVPEPVAGPIVESSVTEKSPALPQ. The span at 127 to 151 shows a compositional bias: basic residues; sequence NRKKNKRNNKKRRSKLKKKSTKNNK. Residues Ser-153 and Ser-156 each carry the phosphoserine modification. Positions 156-165 are enriched in acidic residues; it reads SLDDNEEEDG. Positions 160-161 are X-DNA-binding; it reads NE. Residues 166–177 show a composition bias toward low complexity; that stretch reads VTGTTTEDVTGT. Residue Thr-182 is modified to Phosphothreonine. Ser-271 is subject to Phosphoserine. Thr-295 carries the phosphothreonine modification. The segment at 300-465 is disordered; the sequence is AVTPLINEPE…FFGKLKKLFK (166 aa). Residues Ser-319 and Ser-343 each carry the phosphoserine modification. Over residues 337–363 the composition is skewed to basic and acidic residues; the sequence is LVEKRESTEGVLDGSKKVENKAKKDEE. At Thr-366 the chain carries Phosphothreonine. Basic and acidic residues-rich tracts occupy residues 385–398 and 404–428; these read AEGRKSPAVSEEKE and EKGSKEVKRSETSKEKKPSAKEVKK. Ser-394 carries the phosphoserine modification. At Ser-440 the chain carries Phosphoserine. The span at 451–465 shows a compositional bias: basic residues; that stretch reads KKKTGFFGKLKKLFK.

This sequence belongs to the CRP1/MDG1 family. In terms of processing, cleaved in the vicinity of position 160 to give an X-DNA-binding N-terminal subpeptide and a non-DNA-binding C-terminal subpeptide.

In terms of biological role, cruciform DNA-binding protein which exerts an enhancing effect on the cleavage of cruciform DNA (X-DNA) by endonuclease VII from bacteriophage T4. The polypeptide is Cruciform DNA-recognizing protein 1 (CRP1) (Saccharomyces cerevisiae (strain ATCC 204508 / S288c) (Baker's yeast)).